The primary structure comprises 616 residues: Zinc metalloproteinase nas-36 (616 aa).

The N-terminal stretch at 1–21 (MRRFCRLLFLNSLLSISICKA) is a signal peptide. The propeptide occupies 22-125 (QNPAHLVADE…SKDKTKRLRR (104 aa)). The region spanning 126 to 321 (SFVSDKTATW…VATINTAYCK (196 aa)) is the Peptidase M12A domain. 9 disulfides stabilise this stretch: Cys168–Cys320, Cys191–Cys210, Cys324–Cys345, Cys347–Cys356, Cys367–Cys396, Cys424–Cys444, Cys518–Cys549, Cys522–Cys554, and Cys534–Cys539. Asn173 is a glycosylation site (N-linked (GlcNAc...) asparagine). His218 contacts Zn(2+). Glu219 is an active-site residue. Zn(2+) contacts are provided by His222 and His228. Positions 316–357 (NTAYCKEECKSEKTECEYGGYMRPSKCSECLCPDGLGGEKCE) constitute an EGF-like domain. In terms of domain architecture, CUB spans 367–481 (CGGILELSDE…IGFKIQVRST (115 aa)). The 50-residue stretch at 506–555 (PNVWADWGEWSMCSRTCGGCGIRSRVRSCRSKKCEGRRQEFGTCNLKACP) folds into the TSP type-1 domain.

The cofactor is Zn(2+).

The protein resides in the secreted. In terms of biological role, mtalloprotease. Involved in molting, a process during larval stages in which a new cuticle is formed and the old cuticle is shed. The chain is Zinc metalloproteinase nas-36 from Caenorhabditis briggsae.